Consider the following 134-residue polypeptide: UPF0102 protein Dshi_2830 (134 aa).

The protein belongs to the UPF0102 family.

This chain is UPF0102 protein Dshi_2830, found in Dinoroseobacter shibae (strain DSM 16493 / NCIMB 14021 / DFL 12).